The primary structure comprises 495 residues: E3 ubiquitin-protein ligase RAD18 (495 aa).

M1 bears the N-acetylmethionine mark. The RING-type zinc finger occupies 25 to 64 (CGICFEYFNIAMIIPQCSHNYCSLCIRKFLSYKTQCPTCC). Phosphoserine occurs at positions 99 and 103. Residue T118 is modified to Phosphothreonine. 5 positions are modified to phosphoserine: S122, S125, S142, S158, and S164. The disordered stretch occupies residues 152 to 197 (ENKSKFSPQKEASPAAKTKETRSVEEIAPDPSEAKRPEPPSTSTLK). The UBZ4-type zinc-finger motif lies at 201–228 (KVDCPVCGVNIPESHINKHLDSCLSREE). 4 residues coordinate Zn(2+): C204, C207, H219, and C223. An LR motif motif is present at residues 232–240 (SLRSSVHKR). Positions 248-282 (YNLLSDRDLKKKLKEHGLSIQGNKQQLIKRHQEFV) constitute an SAP domain. Residue S322 is modified to Phosphoserine. Residue K376 forms a Glycyl lysine isopeptide (Lys-Gly) (interchain with G-Cter in SUMO2) linkage. Disordered regions lie at residues 400–423 (NHFS…DSSS) and 456–495 (AWEA…RNRN). Acidic residues predominate over residues 410 to 421 (PEELEPDREEDS). 2 positions are modified to phosphoserine: S471 and S483. A compositionally biased stretch (basic and acidic residues) spans 479 to 495 (RAAESAEIEPRNKRNRN).

Belongs to the RAD18 family. In terms of assembly, homodimer. Interacts with UBE2A and UBE2B, one homodimer binding one molecule of UBE2B. Interacts with SHPRH. Interacts with HLTF. Interacts with SPRTN; leading to enhance chromatin association of RAD18 and RAD18-mediated PCNA ubiquitination and translesion DNA synthesis. Interacts (via C-terminus and phosphorylated form) with SLF1 (via BRCT domains); this interaction is required for efficient repair of UV-induced DNA damage. Interacts with SLF2. Interacts with SMC5; this interaction is increased in a SLF1 or SLF2-dependent manner. Interacts with DNA damage up-regulated protein DDUP. Forms a complex with DDUP and H2AX following DDUP phosphorylation.

Its subcellular location is the nucleus. It is found in the cytoplasm. The protein localises to the cytoskeleton. It localises to the microtubule organizing center. The protein resides in the centrosome. The enzyme catalyses S-ubiquitinyl-[E2 ubiquitin-conjugating enzyme]-L-cysteine + [acceptor protein]-L-lysine = [E2 ubiquitin-conjugating enzyme]-L-cysteine + N(6)-ubiquitinyl-[acceptor protein]-L-lysine.. It participates in protein modification; protein ubiquitination. Functionally, E3 ubiquitin-protein ligase involved in postreplication repair of UV-damaged DNA. Postreplication repair functions in gap-filling of a daughter strand on replication of damaged DNA. Associates to the E2 ubiquitin conjugating enzyme UBE2B to form the UBE2B-RAD18 ubiquitin ligase complex involved in mono-ubiquitination of DNA-associated PCNA on 'Lys-164'. Has ssDNA binding activity. This is E3 ubiquitin-protein ligase RAD18 (RAD18) from Homo sapiens (Human).